The primary structure comprises 469 residues: Pancreatic lipase-related protein 2 (469 aa).

The N-terminal stretch at 1–17 (MLPSWTIGLLLLATVRG) is a signal peptide. A disulfide bridge connects residues C21 and C27. N-linked (GlcNAc...) asparagine glycosylation occurs at N71. The segment at 93-105 (IHGFIDDGDSGWP) is required for galactolipase activity. An intrachain disulfide couples C109 to C120. S171 functions as the Nucleophile in the catalytic mechanism. The active-site Charge relay system is D195. Ca(2+)-binding residues include E206, R209, D211, and D214. C256 and C280 are oxidised to a cystine. A required for galactolipase activity region spans residues 257–279 (QKNILSTIIDINGIWQGIQDFVA). H282 functions as the Charge relay system in the catalytic mechanism. Cystine bridges form between C304–C315 and C318–C323. N-linked (GlcNAc...) asparagine glycosylation is found at N353, N399, and N455. Positions 357–469 (WRYRVSVTLA…ENALQTLYPC (113 aa)) constitute a PLAT domain. The cysteines at positions 453 and 469 are disulfide-linked.

The protein belongs to the AB hydrolase superfamily. Lipase family.

The protein resides in the secreted. It is found in the zymogen granule membrane. It localises to the cell projection. The protein localises to the neuron projection. It carries out the reaction a triacylglycerol + H2O = a diacylglycerol + a fatty acid + H(+). The catalysed reaction is a 1,2-diacyl-3-O-(beta-D-galactosyl)-sn-glycerol + 2 H2O = 3-beta-D-galactosyl-sn-glycerol + 2 a fatty acid + 2 H(+). The enzyme catalyses 1,2,3-tri-(9Z-octadecenoyl)-glycerol + H2O = di-(9Z)-octadecenoylglycerol + (9Z)-octadecenoate + H(+). It catalyses the reaction di-(9Z)-octadecenoylglycerol + H2O = (9Z-octadecenoyl)-glycerol + (9Z)-octadecenoate + H(+). It carries out the reaction (9Z-octadecenoyl)-glycerol + H2O = glycerol + (9Z)-octadecenoate + H(+). The catalysed reaction is 1-(9Z-octadecenoyl)-glycerol + H2O = glycerol + (9Z)-octadecenoate + H(+). The enzyme catalyses 1,2,3-tripropanoylglycerol + H2O = dipropanoylglycerol + propanoate + H(+). It catalyses the reaction 1,2,3-tributanoylglycerol + H2O = dibutanoylglycerol + butanoate + H(+). It carries out the reaction 1,2,3-trioctanoylglycerol + H2O = dioctanoylglycerol + octanoate + H(+). The catalysed reaction is 1,2-didecanoylglycerol + H2O = decanoylglycerol + decanoate + H(+). The enzyme catalyses long chain 1,2-diacyl-3-O-beta-D-galactosyl-sn-glycerol + H2O = long chain acyl-3-O-beta-D-galactosyl-sn-glycerol + a fatty acid + H(+). It catalyses the reaction 1,2-dioctanoyl-3-O-beta-D-galactosyl-sn-glycerol + H2O = octanoyl-3-(beta-D-galactosyl)-sn-glycerol + octanoate + H(+). It carries out the reaction 1,2-didodecanoyl-3-beta-D-galactosyl-sn-glycerol + H2O = dodecanoyl-3-beta-D-galactosyl-sn-glycerol + dodecanoate + H(+). The catalysed reaction is 1-beta-D-galactosyl-2,3-didodecanoyl-sn-glycerol + H2O = 1-beta-D-galactosyl-dodecanoyl-sn-glycerol + dodecanoate + H(+). The enzyme catalyses a 1,2-diacyl-3-O-[alpha-D-galactosyl-(1-&gt;6)-beta-D-galactosyl]-sn-glycerol + H2O = acyl-3-O-[alpha-D-galactosyl-(1-&gt;6)-beta-D-galactosyl]-sn-glycerol + a fatty acid + H(+). It catalyses the reaction long chain 1,2-diacyl-3-O-[alpha-D-galactosyl-(1-&gt;6)-beta-D-galactosyl]-sn-glycerol + H2O = long chain acyl-3-O-[alpha-D-galactosyl-(1-&gt;6)-beta-D-galactosyl]-sn-glycerol + a fatty acid + H(+). It carries out the reaction 1,2-dioctanoyl-3-O-[alpha-D-galactosyl-(1-&gt;6)-beta-D-galactosyl]-sn-glycerol + H2O = octanoyl-3-O-[alpha-D-galactosyl-(1-&gt;6)-beta-D-galactosyl]-sn-glycerol + octanoate + H(+). The catalysed reaction is 1,2-didodecanoyl-3-O-[alpha-D-galactosyl-(1-&gt;6)-beta-D-galactosyl]-sn-glycerol + H2O = dodecanoyl-3-O-[alpha-D-galactosyl-(1-&gt;6)-beta-D-galactosyl]-sn-glycerol + dodecanoate + H(+). The enzyme catalyses a 1,2-diacyl-sn-glycero-3-phosphocholine + H2O = a monoacyl-sn-glycero-3-phosphocholine + a fatty acid + H(+). The protein operates within glycerolipid metabolism; triacylglycerol degradation. Its pathway is glycolipid metabolism. Its function is as follows. Lipase that primarily hydrolyzes triglycerides and galactosylglycerides. In neonates, may play a major role in pancreatic digestion of dietary fats such as milk fat globules enriched in long-chain triglycerides. Hydrolyzes short-, medium- and long-chain fatty acyls in triglycerides without apparent positional specificity. Can completely deacylate triacylglycerols. When the liver matures and bile salt synthesis increases, likely functions mainly as a galactolipase and monoacylglycerol lipase. Hydrolyzes monogalactosyldiglycerols (MGDG) and digalactosyldiacylglycerols (DGDG) present in a plant-based diet, releasing long-chain polyunsaturated fatty acids. Hydrolyzes medium- and long-chain fatty acyls in galactolipids. May act together with LIPF to hydrolyze partially digested triglycerides. Hydrolyzes long-chain monoglycerides with high efficiency. In cytotoxic T cells, contributes to perforin-dependent cell lysis, but is unlikely to mediate direct cytotoxicity. Also has low phospholipase activity. In neurons, required for the localization of the phospholipid 1-oleoyl-2-palmitoyl-PC (OPPC) to neurite tips through acyl chain remodeling of membrane phospholipids. The resulting OPPC-rich lipid membrane domain recruits the t-SNARE protein STX4 by selectively interacting with the STX4 transmembrane domain and this promotes surface expression of the dopamine transporter SLC6A3/DAT at neurite tips by facilitating fusion of SLC6A3-containing transport vesicles with the plasma membrane. The sequence is that of Pancreatic lipase-related protein 2 from Bos taurus (Bovine).